Here is a 1212-residue protein sequence, read N- to C-terminus: Filamin-A-interacting protein 1 (1212 aa).

Residues 1–15 (MRSRNQGGESSSNGH) show a composition bias toward polar residues. The segment at 1–73 (MRSRNQGGES…SEKKTKKSVE (73 aa)) is disordered. 2 stretches are compositionally biased toward basic and acidic residues: residues 32 to 47 (PSED…KEED) and 60 to 73 (PSGE…KSVE). Ser-137 bears the Phosphoserine mark. 2 coiled-coil regions span residues 191–575 (DYMN…DELM) and 623–777 (PEDN…ELEL). 2 disordered regions span residues 871-898 (WMRK…HPGE) and 948-975 (KPRI…GPER). The residue at position 978 (Ser-978) is a Phosphoserine. The interval 1102–1190 (VSTGTVLRSP…TKFQPRAETQ (89 aa)) is disordered. The segment covering 1124–1138 (VTSTITITPVTTSST) has biased composition (low complexity). Over residues 1139–1155 (RGTQSVSGQDGSSQRPT) the composition is skewed to polar residues.

It belongs to the FILIP1 family. Interacts with FLNA. Interacts with RHOD (in GTP-bound form). As to expression, expressed in muscle tissue, including heart. Found in cortical ventricular zone.

It localises to the cytoplasm. The protein resides in the cytoskeleton. It is found in the stress fiber. Functionally, by acting through a filamin-A/F-actin axis, it controls the start of neocortical cell migration from the ventricular zone. May be able to induce the degradation of Filamin A. This chain is Filamin-A-interacting protein 1 (Filip1), found in Rattus norvegicus (Rat).